A 439-amino-acid chain; its full sequence is Chitinase-like protein Idgf1 (439 aa).

The N-terminal stretch at 1 to 20 is a signal peptide; that stretch reads MRFQLCYLLGLLSVTSLSHA. One can recognise a GH18 domain in the interval 22 to 439; that stretch reads SNLICYYDST…IVRSIKYFMG (418 aa). An intrachain disulfide couples C26 to C53. 3 N-linked (GlcNAc...) asparagine glycosylation sites follow: N122, N218, and N346. C340 and C423 are oxidised to a cystine.

Belongs to the glycosyl hydrolase 18 family. IDGF subfamily. In terms of processing, glycosylated.

The protein localises to the secreted. Cooperates with insulin-like peptides to stimulate the proliferation, polarization and motility of imaginal disk cells. May act by stabilizing the binding of insulin-like peptides to its receptor through a simultaneous interaction with both molecules to form a multiprotein signaling complex. This chain is Chitinase-like protein Idgf1 (Idgf1), found in Drosophila yakuba (Fruit fly).